A 132-amino-acid polypeptide reads, in one-letter code: Small ribosomal subunit protein uS8 (132 aa).

This sequence belongs to the universal ribosomal protein uS8 family. As to quaternary structure, part of the 30S ribosomal subunit. Contacts proteins S5 and S12.

Its function is as follows. One of the primary rRNA binding proteins, it binds directly to 16S rRNA central domain where it helps coordinate assembly of the platform of the 30S subunit. This Rickettsia massiliae (strain Mtu5) protein is Small ribosomal subunit protein uS8.